A 152-amino-acid chain; its full sequence is 6,7-dimethyl-8-ribityllumazine synthase (152 aa).

5-amino-6-(D-ribitylamino)uracil is bound by residues Phe-22, 54 to 56, and 78 to 80; these read AFE and AVI. A (2S)-2-hydroxy-3-oxobutyl phosphate-binding site is contributed by 83 to 84; it reads ET. The active-site Proton donor is the His-86. Phe-111 provides a ligand contact to 5-amino-6-(D-ribitylamino)uracil. Arg-125 is a (2S)-2-hydroxy-3-oxobutyl phosphate binding site.

The protein belongs to the DMRL synthase family.

It carries out the reaction (2S)-2-hydroxy-3-oxobutyl phosphate + 5-amino-6-(D-ribitylamino)uracil = 6,7-dimethyl-8-(1-D-ribityl)lumazine + phosphate + 2 H2O + H(+). It functions in the pathway cofactor biosynthesis; riboflavin biosynthesis; riboflavin from 2-hydroxy-3-oxobutyl phosphate and 5-amino-6-(D-ribitylamino)uracil: step 1/2. In terms of biological role, catalyzes the formation of 6,7-dimethyl-8-ribityllumazine by condensation of 5-amino-6-(D-ribitylamino)uracil with 3,4-dihydroxy-2-butanone 4-phosphate. This is the penultimate step in the biosynthesis of riboflavin. This Limosilactobacillus reuteri (strain DSM 20016) (Lactobacillus reuteri) protein is 6,7-dimethyl-8-ribityllumazine synthase.